Reading from the N-terminus, the 305-residue chain is Peroxisome assembly protein 26 (305 aa).

Topologically, residues 1–246 (MKSDASTSAA…RRLWGSVVSH (246 aa)) are cytoplasmic. Residues 247 to 267 (LLSQPFRKGLLAALILCLLIL) traverse the membrane as a helical; Signal-anchor for type II membrane protein segment. The Peroxisomal matrix segment spans residues 268–305 (RFDPAAPSSLPFLYQLTQLFRRIQKATLSRLYPLALRD).

Belongs to the peroxin-26 family. In terms of assembly, interacts (via its cytoplasmic domain) with PEX6; interaction is direct and is ATP-dependent. Interacts with PEX1; interaction is indirect and is mediated via interaction with PEX6.

The protein resides in the peroxisome membrane. Its function is as follows. Peroxisomal docking factor that anchors PEX1 and PEX6 to peroxisome membranes. PEX26 is therefore required for the formation of the PEX1-PEX6 AAA ATPase complex, a complex that mediates the extraction of the PEX5 receptor from peroxisomal membrane. This Mus musculus (Mouse) protein is Peroxisome assembly protein 26.